We begin with the raw amino-acid sequence, 966 residues long: RNA polymerase-associated protein RapA (966 aa).

The region spanning 163 to 337 is the Helicase ATP-binding domain; the sequence is EVGRRIAPRV…FARLHLLDPN (175 aa). 176–183 provides a ligand contact to ATP; it reads DEVGLGKT. A DEAH box motif is present at residues 283 to 286; sequence DEAH. Residues 489 to 643 enclose the Helicase C-terminal domain; that stretch reads RVDWLINLVK…TCPMGAILHE (155 aa).

The protein belongs to the SNF2/RAD54 helicase family. RapA subfamily. As to quaternary structure, interacts with the RNAP. Has a higher affinity for the core RNAP than for the holoenzyme. Its ATPase activity is stimulated by binding to RNAP.

Functionally, transcription regulator that activates transcription by stimulating RNA polymerase (RNAP) recycling in case of stress conditions such as supercoiled DNA or high salt concentrations. Probably acts by releasing the RNAP, when it is trapped or immobilized on tightly supercoiled DNA. Does not activate transcription on linear DNA. Probably not involved in DNA repair. This Histophilus somni (strain 129Pt) (Haemophilus somnus) protein is RNA polymerase-associated protein RapA.